An 81-amino-acid polypeptide reads, in one-letter code: Saposin-C (81 aa).

A Saposin B-type domain is found at 1–81; that stretch reads ESVTCKACEY…CSELGLCMSG (81 aa). Intrachain disulfides connect Cys-5/Cys-78, Cys-8/Cys-72, and Cys-36/Cys-47. The N-linked (GlcNAc...) asparagine glycan is linked to Asn-22.

Saposin-A and saposin-C stimulate the hydrolysis of glucosylceramide by beta-glucosylceramidase (EC 3.2.1.45) and galactosylceramide by beta-galactosylceramidase (EC 3.2.1.46). Saposin-C apparently acts by combining with the enzyme and acidic lipid to form an activated complex, rather than by solubilizing the substrate. The chain is Saposin-C (PSAP) from Cavia porcellus (Guinea pig).